Reading from the N-terminus, the 233-residue chain is Probable 2-phosphosulfolactate phosphatase (233 aa).

The protein belongs to the ComB family. Mg(2+) is required as a cofactor.

The enzyme catalyses (2R)-O-phospho-3-sulfolactate + H2O = (2R)-3-sulfolactate + phosphate. The chain is Probable 2-phosphosulfolactate phosphatase from Clostridium tetani (strain Massachusetts / E88).